A 160-amino-acid chain; its full sequence is Cyclic pyranopterin monophosphate synthase (160 aa).

Residues 77–79 (LCH) and 115–116 (ME) each bind substrate. Asp-130 is a catalytic residue.

The protein belongs to the MoaC family. Homohexamer; trimer of dimers.

The enzyme catalyses (8S)-3',8-cyclo-7,8-dihydroguanosine 5'-triphosphate = cyclic pyranopterin phosphate + diphosphate. It participates in cofactor biosynthesis; molybdopterin biosynthesis. In terms of biological role, catalyzes the conversion of (8S)-3',8-cyclo-7,8-dihydroguanosine 5'-triphosphate to cyclic pyranopterin monophosphate (cPMP). The protein is Cyclic pyranopterin monophosphate synthase of Parvibaculum lavamentivorans (strain DS-1 / DSM 13023 / NCIMB 13966).